Here is a 385-residue protein sequence, read N- to C-terminus: Spermidine/putrescine import ATP-binding protein PotA (385 aa).

Positions 6-238 constitute an ABC transporter domain; the sequence is IEFKNVSKVF…PINHFVATFI (233 aa). 40 to 47 is an ATP binding site; the sequence is GSSGSGKS.

The protein belongs to the ABC transporter superfamily. Spermidine/putrescine importer (TC 3.A.1.11.1) family. The complex is composed of two ATP-binding proteins (PotA), two transmembrane proteins (PotB and PotC) and a solute-binding protein (PotD).

It localises to the cell membrane. The catalysed reaction is ATP + H2O + polyamine-[polyamine-binding protein]Side 1 = ADP + phosphate + polyamineSide 2 + [polyamine-binding protein]Side 1.. In terms of biological role, part of the ABC transporter complex PotABCD involved in spermidine/putrescine import. Responsible for energy coupling to the transport system. The polypeptide is Spermidine/putrescine import ATP-binding protein PotA (Streptococcus sanguinis (strain SK36)).